The sequence spans 100 residues: uncharacterized protein (100 aa).

This is an uncharacterized protein from Rhizobium leguminosarum bv. phaseoli.